A 316-amino-acid polypeptide reads, in one-letter code: Protein lifeguard 2 (316 aa).

Residues 1–46 (MTQGKLSVANKAPGTEGQQQANGEKKETPAVPSAPPSYEEATSGEG) form a disordered region. 3 consecutive transmembrane segments (helical) span residues 106 to 126 (VYTILLIQLLVTLGVVALFTF), 138 to 158 (PGWYWASYAVFFATYLTLACC), and 165 to 185 (FPWNLILLTIFTLSMAYLTGM). Asn191 carries N-linked (GlcNAc...) asparagine glycosylation. The next 4 helical transmembrane spans lie at 194–214 (SVLLCLSITALVCLSVTVFSF), 225–245 (GVLFVLLMTLFFSGLILAILL), 251–271 (PWLHAVYAVLGAGVFTLFLAF), and 290–310 (IFGALNIYLDIIYIFTFFLQL).

This sequence belongs to the BI1 family. LFG subfamily. Interacts with FAS/TNFRSF6 and BAX.

It is found in the cell membrane. It localises to the membrane raft. The protein localises to the postsynaptic cell membrane. Functionally, antiapoptotic protein which protects cells uniquely from Fas-induced apoptosis. Regulates Fas-mediated apoptosis in neurons by interfering with caspase-8 activation. Plays a role in cerebellar development by affecting cerebellar size, internal granular layer (IGL) thickness, and Purkinje cell (PC) development. The sequence is that of Protein lifeguard 2 (FAIM2) from Bos taurus (Bovine).